The chain runs to 214 residues: uncharacterized protein (214 aa).

The first 24 residues, 1-24 (MVTPHGILLLTITAAASLLWITFA), serve as a signal peptide directing secretion. The interval 99–121 (APNDTQEQNSTRNKRDSESYTAT) is disordered. The span at 100-109 (PNDTQEQNST) shows a compositional bias: polar residues.

Component of the acid-insoluble and acid-soluble organic matrix of the aragonitic skeleton (at protein level).

It is found in the secreted. This is an uncharacterized protein from Acropora millepora (Staghorn coral).